The chain runs to 435 residues: Adenylosuccinate synthetase (435 aa).

GTP contacts are provided by residues 11-17 (GDEGKGK) and 39-41 (GHT). The Proton acceptor role is filled by Asp12. Asp12 and Gly39 together coordinate Mg(2+). Residues 12-15 (DEGK), 37-40 (NAGH), Thr128, Arg142, Gln223, Thr238, and Arg302 each bind IMP. Catalysis depends on His40, which acts as the Proton donor. 298–304 (SVTGRPR) lines the substrate pocket. GTP contacts are provided by residues Arg304, 330–332 (KLD), and 412–414 (STG).

This sequence belongs to the adenylosuccinate synthetase family. As to quaternary structure, homodimer. Requires Mg(2+) as cofactor.

Its subcellular location is the cytoplasm. It catalyses the reaction IMP + L-aspartate + GTP = N(6)-(1,2-dicarboxyethyl)-AMP + GDP + phosphate + 2 H(+). It participates in purine metabolism; AMP biosynthesis via de novo pathway; AMP from IMP: step 1/2. Plays an important role in the de novo pathway of purine nucleotide biosynthesis. Catalyzes the first committed step in the biosynthesis of AMP from IMP. The sequence is that of Adenylosuccinate synthetase from Coxiella burnetii (strain Dugway 5J108-111).